Reading from the N-terminus, the 382-residue chain is MRSWRWSVSRIMRLFLRWFRLCPRRGHRKRSRVRDLWNYGMVVLKSLYYNVQTNSDTVLDCMFEPIYWLVDNMTRWFGVVFVCLVMALTSSVVVIVYLCVLPIIFSSYPVYWILWHLCYGHWNLLMVVFHYYKATTTQPGFPPQEKTDIPTVTICKKCIVPKPARTHHCSICNRCILKMDHHCPWLNNCVGHFNHRYFFSFCLFMTMGCVYCSISAKDMFLDAYNAIESGRYKGGASQGEAVPGAGLIYISFQHQSSYQTPPPAFTHQERMVHKSLVYLWVLTSSVAVALGALTLWHAILITRGETSVERHINRKERRRLKLRGKLFRNPYHHGRINNWRIFFGVEKGSDWLWRVLLPSTHPPLGDGLTWDCPAYKSSTTAI.

Residues 1 to 75 (MRSWRWSVSR…IYWLVDNMTR (75 aa)) are Cytoplasmic-facing. The helical transmembrane segment at 76-96 (WFGVVFVCLVMALTSSVVVIV) threads the bilayer. The Lumenal segment spans residues 97–107 (YLCVLPIIFSS). The chain crosses the membrane as a helical span at residues 108–130 (YPVYWILWHLCYGHWNLLMVVFH). Residues 131–196 (YYKATTTQPG…NNCVGHFNHR (66 aa)) lie on the Cytoplasmic side of the membrane. The 51-residue stretch at 153-203 (TICKKCIVPKPARTHHCSICNRCILKMDHHCPWLNNCVGHFNHRYFFSFCL) folds into the DHHC domain. Catalysis depends on C183, which acts as the S-palmitoyl cysteine intermediate. A helical membrane pass occupies residues 197–217 (YFFSFCLFMTMGCVYCSISAK). Residues 218–275 (DMFLDAYNAIESGRYKGGASQGEAVPGAGLIYISFQHQSSYQTPPPAFTHQERMVHKS) lie on the Lumenal side of the membrane. Residues 276–296 (LVYLWVLTSSVAVALGALTLW) traverse the membrane as a helical segment. Topologically, residues 297 to 382 (HAILITRGET…PAYKSSTTAI (86 aa)) are cytoplasmic.

The protein belongs to the DHHC palmitoyltransferase family.

The protein localises to the endoplasmic reticulum membrane. It catalyses the reaction L-cysteinyl-[protein] + hexadecanoyl-CoA = S-hexadecanoyl-L-cysteinyl-[protein] + CoA. Functionally, palmitoyl acyltransferase that mediates palmitoylation of proteins and is required during embryonic heart development. Involved in the proliferation of neural stem cells by regulating the FGF/ERK pathway. The sequence is that of Palmitoyltransferase ZDHHC16B from Danio rerio (Zebrafish).